Reading from the N-terminus, the 306-residue chain is Phospho-N-acetylmuramoyl-pentapeptide-transferase (306 aa).

10 helical membrane passes run 1–21 (MDIYSAATLLAEFVLGIIIFP), 49–69 (GTPTAGGIVFISLTVIAGLIL), 75–95 (LIFTLLFYGFIGFLDDFVSIV), 104–124 (AWQKLALQFLFSIWIAYTILQ), 130–150 (IFGITVPSWLFYLFTMLLVSG), 160–180 (GIDGLAGWVFVTSMIPFMFFS), 182–202 (SSMEYKAIFVIIMPLLSFLVY), 209–229 (VFMGDTGSLALGAYISTYALM), 234–254 (LSLLFFTPIFLLETISVILQV), and 284–304 (IVGVFSAWNLAIAIFYIAFFL).

Belongs to the glycosyltransferase 4 family. MraY subfamily. Mg(2+) is required as a cofactor.

The protein resides in the cell inner membrane. It catalyses the reaction UDP-N-acetyl-alpha-D-muramoyl-L-alanyl-gamma-D-glutamyl-meso-2,6-diaminopimeloyl-D-alanyl-D-alanine + di-trans,octa-cis-undecaprenyl phosphate = di-trans,octa-cis-undecaprenyl diphospho-N-acetyl-alpha-D-muramoyl-L-alanyl-D-glutamyl-meso-2,6-diaminopimeloyl-D-alanyl-D-alanine + UMP. It functions in the pathway cell wall biogenesis; peptidoglycan biosynthesis. Functionally, catalyzes the initial step of the lipid cycle reactions in the biosynthesis of the cell wall peptidoglycan: transfers peptidoglycan precursor phospho-MurNAc-pentapeptide from UDP-MurNAc-pentapeptide onto the lipid carrier undecaprenyl phosphate, yielding undecaprenyl-pyrophosphoryl-MurNAc-pentapeptide, known as lipid I. The chain is Phospho-N-acetylmuramoyl-pentapeptide-transferase from Fervidobacterium nodosum (strain ATCC 35602 / DSM 5306 / Rt17-B1).